Consider the following 689-residue polypeptide: DNA ligase (689 aa).

NAD(+) contacts are provided by residues 40-44, 89-90, and E121; these read DSEYD and SL. The N6-AMP-lysine intermediate role is filled by K123. The NAD(+) site is built by R144, E179, K295, and K319. Zn(2+) is bound by residues C413, C416, C431, and C437. Positions 610–689 constitute a BRCT domain; the sequence is REQSGLTDKI…EEWLTLIKNV (80 aa).

Belongs to the NAD-dependent DNA ligase family. LigA subfamily. Mg(2+) serves as cofactor. It depends on Mn(2+) as a cofactor.

It catalyses the reaction NAD(+) + (deoxyribonucleotide)n-3'-hydroxyl + 5'-phospho-(deoxyribonucleotide)m = (deoxyribonucleotide)n+m + AMP + beta-nicotinamide D-nucleotide.. Its function is as follows. DNA ligase that catalyzes the formation of phosphodiester linkages between 5'-phosphoryl and 3'-hydroxyl groups in double-stranded DNA using NAD as a coenzyme and as the energy source for the reaction. It is essential for DNA replication and repair of damaged DNA. The protein is DNA ligase of Rickettsia conorii (strain ATCC VR-613 / Malish 7).